The primary structure comprises 178 residues: uncharacterized protein (178 aa).

A run of 5 helical transmembrane segments spans residues 1–21 (MISI…YGGG), 47–67 (MLAL…AYVG), 75–95 (GFLI…IVLL), 117–137 (VIAV…IKAI), and 158–178 (MHPA…IPYL).

This sequence belongs to the chromate ion transporter (CHR) (TC 2.A.51) family.

It localises to the cell membrane. This is an uncharacterized protein from Bacillus subtilis (strain 168).